The following is a 263-amino-acid chain: R-spondin-1 (263 aa).

A signal peptide spans 1 to 20 (MRLGLCVVALVLSWTHLTIS). 2 FU repeats span residues 34–85 (AEGS…GYFD) and 91–135 (MNKC…GSSA). Disulfide bonds link C40/C47, C44/C53, C56/C75, C79/C94, C97/C105, C102/C111, C114/C125, C129/C142, C148/C190, C159/C166, and C199/C206. N137 is a glycosylation site (N-linked (GlcNAc...) asparagine). The 61-residue stretch at 147–207 (QCEMSEWSPW…RCTVRRVPCP (61 aa)) folds into the TSP type-1 domain. W153 and W156 each carry a C-linked (Man) tryptophan glycan. Residues 206-263 (CPEGQKRRKGGQGRRENANRNLARKESKEAGAGSRRRKGQQQQQQQGTVGPLTSAGPA) form a disordered region. Over residues 218–234 (GRRENANRNLARKESKE) the composition is skewed to basic and acidic residues.

This sequence belongs to the R-spondin family. As to quaternary structure, interacts with the extracellular domain of FZD8 and LRP6. It however does not form a ternary complex with FZD8 and LRP6. Interacts with WNT1. Binds heparin. Interacts with ZNRF3; promoting indirect interaction between ZNRF3 and LGR4 and membrane clearance of ZNRF3. Interacts with LGR4, LGR5 and LGR6. Identified in a complex composed of RNF43, LGR5 and RSPO1. Interacts (via FU repeats) with KREM1. Post-translationally, C-, and N-glycosylated. N-glycosylation at Asn-137, negatively influences its secretion and enhancing effect on Wnt/beta-catenin signaling. C-mannosylation at Trp-156 by DPY19L3 is required for its secretion and regulates the enhancing activity of Wnt signaling. Abundantly expressed in adrenal glands, ovary, testis, thyroid and trachea but not in bone marrow, spinal cord, stomach, leukocytes colon, small intestine, prostate, thymus and spleen.

It localises to the secreted. The protein resides in the nucleus. Activator of the canonical Wnt signaling pathway by acting as a ligand for LGR4-6 receptors. Upon binding to LGR4-6 (LGR4, LGR5 or LGR6), LGR4-6 associate with phosphorylated LRP6 and frizzled receptors that are activated by extracellular Wnt receptors, triggering the canonical Wnt signaling pathway to increase expression of target genes. Also regulates the canonical Wnt/beta-catenin-dependent pathway and non-canonical Wnt signaling by acting as an inhibitor of ZNRF3, an important regulator of the Wnt signaling pathway. Acts as a ligand for frizzled FZD8 and LRP6. May negatively regulate the TGF-beta pathway. Has a essential roles in ovary determination. Regulates Wnt signaling by antagonizing DKK1/KREM1-mediated internalization of LRP6 through an interaction with KREM1. The protein is R-spondin-1 (RSPO1) of Homo sapiens (Human).